A 342-amino-acid chain; its full sequence is GTPase Obg (342 aa).

In terms of domain architecture, Obg spans 1 to 159; sequence MQFIDRAEIE…RNLRLELKLL (159 aa). One can recognise an OBG-type G domain in the interval 160–328; that stretch reads AEVGIIGLPN…LLQAIWHRLD (169 aa). GTP contacts are provided by residues 166-173, 191-195, 213-216, 280-283, and 309-311; these read GLPNAGKS, FTTLV, DIPG, NKVD, and SAV. Residues Ser173 and Thr193 each coordinate Mg(2+).

Belongs to the TRAFAC class OBG-HflX-like GTPase superfamily. OBG GTPase family. As to quaternary structure, monomer. The cofactor is Mg(2+).

The protein resides in the cytoplasm. Functionally, an essential GTPase which binds GTP, GDP and possibly (p)ppGpp with moderate affinity, with high nucleotide exchange rates and a fairly low GTP hydrolysis rate. Plays a role in control of the cell cycle, stress response, ribosome biogenesis and in those bacteria that undergo differentiation, in morphogenesis control. The sequence is that of GTPase Obg from Crocosphaera subtropica (strain ATCC 51142 / BH68) (Cyanothece sp. (strain ATCC 51142)).